The sequence spans 419 residues: Queuine tRNA-ribosyltransferase accessory subunit 2 (419 aa).

Residues Cys326, Cys328, Cys331, and His357 each coordinate Zn(2+).

It belongs to the queuine tRNA-ribosyltransferase family. QTRT2 subfamily. In terms of assembly, heterodimer of a catalytic subunit and an accessory subunit. The cofactor is Zn(2+).

It localises to the cytoplasm. Its function is as follows. Non-catalytic subunit of the queuine tRNA-ribosyltransferase (TGT) that catalyzes the base-exchange of a guanine (G) residue with queuine (Q) at position 34 (anticodon wobble position) in tRNAs with GU(N) anticodons (tRNA-Asp, -Asn, -His and -Tyr), resulting in the hypermodified nucleoside queuosine (7-(((4,5-cis-dihydroxy-2-cyclopenten-1-yl)amino)methyl)-7-deazaguanosine). The sequence is that of Queuine tRNA-ribosyltransferase accessory subunit 2 from Drosophila grimshawi (Hawaiian fruit fly).